The sequence spans 150 residues: Meiotic expression up-regulated protein 15 (150 aa).

In Schizosaccharomyces pombe (strain 972 / ATCC 24843) (Fission yeast), this protein is Meiotic expression up-regulated protein 15 (meu15).